A 596-amino-acid chain; its full sequence is Leucine-rich repeat and IQ domain-containing protein 4 (596 aa).

22 LRR repeats span residues 22 to 44 (LPRL…LLRQ), 59 to 83 (LTDR…ILAL), 84 to 106 (KELE…IQQL), 108 to 129 (NTKV…LGAL), 130 to 152 (SSLE…VVSR), 153 to 176 (LRTL…ICKS), 177 to 200 (LHHL…IVNQ), 202 to 223 (KLRE…LCVL), 224 to 246 (YNLE…IGHL), 248 to 269 (RLQK…LSQC), 270 to 293 (SKLS…ELLT), 295 to 315 (LTEV…LCSW), 317 to 337 (SLHL…SFKR), 338 to 361 (LINL…ICAL), 362 to 384 (KNLE…ISLL), 385 to 407 (SNLK…IFSL), 410 to 433 (LEKL…IKRL), 434 to 457 (MNLK…GLMP), 459 to 479 (LEVL…ICRT), 480 to 502 (RNLR…LDHL), 504 to 525 (NLKV…VCNQ), and 527 to 549 (NEAI…TIQA). Positions 540 to 569 (RKMMATTIQAWWRGIMVRKGYGSYEELLKA) constitute an IQ domain. The span at 569-587 (ARKKGKSPPKDKKGKKAAK) shows a compositional bias: basic residues. A disordered region spans residues 569 to 596 (ARKKGKSPPKDKKGKKAAKGKPEKGNKK).

This chain is Leucine-rich repeat and IQ domain-containing protein 4 (Lrriq4), found in Mus musculus (Mouse).